Consider the following 245-residue polypeptide: Sugar fermentation stimulation protein homolog (245 aa).

Belongs to the SfsA family.

The sequence is that of Sugar fermentation stimulation protein homolog from Rhodospirillum rubrum (strain ATCC 11170 / ATH 1.1.1 / DSM 467 / LMG 4362 / NCIMB 8255 / S1).